A 182-amino-acid polypeptide reads, in one-letter code: Large ribosomal subunit protein uL6 (182 aa).

It belongs to the universal ribosomal protein uL6 family. Part of the 50S ribosomal subunit.

In terms of biological role, this protein binds to the 23S rRNA, and is important in its secondary structure. It is located near the subunit interface in the base of the L7/L12 stalk, and near the tRNA binding site of the peptidyltransferase center. The polypeptide is Large ribosomal subunit protein uL6 (Dehalococcoides mccartyi (strain ATCC BAA-2266 / KCTC 15142 / 195) (Dehalococcoides ethenogenes (strain 195))).